We begin with the raw amino-acid sequence, 260 residues long: ProSAAS (260 aa).

The first 33 residues, 1–33, serve as a signal peptide directing secretion; that stretch reads MAGSPLLWGPRAGGVGLLVLLLLGLFRPPPALC. Residues 34 to 215 form a proSAAS(1-180) region; that stretch reads ARPVKEPRGL…SADSEGVAAP (182 aa). Threonine 53 is a glycosylation site (O-linked (GalNAc...) threonine). Residues 165-188 form a disordered region; the sequence is RPRPPVYDDGPAGPDAEEAGDETP. Positions 179–188 are enriched in acidic residues; sequence DAEEAGDETP. Positions 221 to 260 are C-terminal inhibitory domain; interacts with PCSK1; that stretch reads AADHDVGSELPPEGVLGALLRVKRLETPAPQVPARRLLPP. O-linked (GalNAc...) serine glycosylation occurs at serine 228. Residues 239–244 carry the Sufficient for inhibition of PCSK1 motif; it reads LLRVKR. Threonine 247 carries an O-linked (GalNAc...) threonine glycan.

Interacts via the C-terminal inhibitory domain with PCSK1 66 kDa form. Proteolytically cleaved in the Golgi. In terms of processing, O-glycosylated with a core 1 or possibly core 8 glycan. As to expression, expressed in brain and pancreas.

The protein resides in the secreted. It is found in the golgi apparatus. Its subcellular location is the trans-Golgi network. Its function is as follows. May function in the control of the neuroendocrine secretory pathway. Proposed be a specific endogenous inhibitor of PCSK1. ProSAAS and Big PEN-LEN, both containing the C-terminal inhibitory domain, but not the further processed peptides reduce PCSK1 activity in the endoplasmic reticulum and Golgi. It reduces the activity of the 84 kDa form but not the autocatalytically derived 66 kDa form of PCSK1. Subsequent processing of proSAAS may eliminate the inhibition. Slows down convertase-mediated processing of proopiomelanocortin and proenkephalin. May control the intracellular timing of PCSK1 rather than its total level of activity. Functionally, endogenous ligand for GPR171. Neuropeptide involved in the regulation of feeding. This Homo sapiens (Human) protein is ProSAAS (PCSK1N).